Reading from the N-terminus, the 509-residue chain is MNLLDPFMKMTDEQEKGLSGAPSPTMSEGSRGSPCPSGSGSDTENTRPQENTFPKGEPDLKKESEEDKFPVCIREAVSQVLKGYDWTLVPMPVRVNGSSKNKPHVKRPMNAFMVWAQAARRKLADQYPHLHNAELSKTLGKLWRLLNESEKRPFVEEAERLRVQHKKDHPDYKYQPRRRKSVKNGQAEAEEATEQTHISPNAIFKALQADSPHSSSGMSEVHSPGEHSGQSQGPPTPPTTPKTDVQPGKADLKREGRPLPEGGRQPPIDFRDVDIGELSSDVISNIETFDVNEFDQYLPPNGHPGVPATHGQVTYTGSYGISSTAATPAGAGHVWMSKQQAPPPPPHPPQQPPPVPQAPAQPQAALPQQPQAPPQQPQAHTLTTLSSEPGQSQRTHIKTEQLSPSHYSEQQQHSPQQIAYSPFNLPHYSPSYPPITRSQYDYTDHQNSGSYYSHARSQGSVLYSTFTYMNPAHGPMYTPIADTSGVPSIPQTHSPQHWEQPVYTQLTRP.

Disordered regions lie at residues Met1–Glu66 and Arg160–Arg271. Over residues Ser27 to Ser41 the composition is skewed to low complexity. Residues Asp42–Thr52 are compositionally biased toward polar residues. Basic and acidic residues-rich tracts occupy residues Gly56–Glu66 and Arg160–Tyr174. Residues Glu63–Pro103 form a dimerization (DIM) region. Residues Glu63–Pro103 are PQA. Phosphoserine is present on Ser64. The HMG box DNA-binding region spans Val105 to Lys173. Ser211 bears the Phosphoserine mark. The segment at Pro224–Pro307 is transactivation domain (TAM). Short sequence motifs (9aaTAD) lie at residues Ile275 to Ser284 and Asp290 to Leu298. Disordered stretches follow at residues Trp335–Pro415 and Tyr420–Gln439. The span at Ala341–Pro359 shows a compositional bias: pro residues. Over residues Ala360–Gln369 the composition is skewed to low complexity. Residues His380–Pro415 are compositionally biased toward polar residues. The segment at Arg394–Pro509 is transactivation domain (TAC). A Glycyl lysine isopeptide (Lys-Gly) (interchain with G-Cter in ubiquitin) cross-link involves residue Lys398. Residues Ser460–Tyr468 carry the 9aaTAD 3 motif. Residues Pro479–Pro509 form a disordered region. The span at Gly485–Pro509 shows a compositional bias: polar residues.

Homodimer; homodimerization is required for activity. Interacts (via C-terminus) with ZNF219; forming a complex that binds to the COL2A1 promoter and activates COL2A1 expression. Interacts with DDRGK1. Interacts with EP300/p300. Interacts with beta-catenin (CTNNB1); inhibiting CTNNB1 activity by competing with the binding sites of TCF/LEF within CTNNB1. Post-translationally, acetylated; acetylation impairs nuclear localization and ability to transactivate expression of target genes. Deacetylated by SIRT1. Phosphorylation at Ser-64 and Ser-211 by PKA increases transcriptional activity and may help delay chondrocyte maturation downstream of PTHLH/PTHrP signaling. Phosphorylation at either Ser-64 or Ser-211 is required for sumoylation, but phosphorylation is not dependent on sumoylation. Phosphorylated on tyrosine residues; tyrosine dephosphorylation by PTPN11/SHP2 blocks SOX9 phosphorylation by PKA and subsequent SUMOylation. In terms of processing, sumoylated; phosphorylation at either Ser-64 or Ser-211 is required for sumoylation. Sumoylation is induced by BMP signaling pathway. Post-translationally, ubiquitinated; ubiquitination leads to proteasomal degradation and is negatively regulated by DDRGK1.

The protein resides in the nucleus. Its function is as follows. Transcription factor that plays a key role in chondrocytes differentiation and skeletal development. Specifically binds the 5'-ACAAAG-3' DNA motif present in enhancers and super-enhancers and promotes expression of genes important for chondrogenesis, including cartilage matrix protein-coding genes COL2A1, COL4A2, COL9A1, COL11A2 and ACAN, SOX5 and SOX6. Also binds to some promoter regions. Plays a central role in successive steps of chondrocyte differentiation. Absolutely required for precartilaginous condensation, the first step in chondrogenesis during which skeletal progenitors differentiate into prechondrocytes. Together with SOX5 and SOX6, required for overt chondrogenesis when condensed prechondrocytes differentiate into early stage chondrocytes, the second step in chondrogenesis. Later, required to direct hypertrophic maturation and block osteoblast differentiation of growth plate chondrocytes: maintains chondrocyte columnar proliferation, delays prehypertrophy and then prevents osteoblastic differentiation of chondrocytes by lowering beta-catenin (CTNNB1) signaling and RUNX2 expression. Also required for chondrocyte hypertrophy, both indirectly, by keeping the lineage fate of chondrocytes, and directly, by remaining present in upper hypertrophic cells and transactivating COL10A1 along with MEF2C. Low lipid levels are the main nutritional determinant for chondrogenic commitment of skeletal progenitor cells: when lipids levels are low, FOXO (FOXO1 and FOXO3) transcription factors promote expression of SOX9, which induces chondrogenic commitment and suppresses fatty acid oxidation. Mechanistically, helps, but is not required, to remove epigenetic signatures of transcriptional repression and deposit active promoter and enhancer marks at chondrocyte-specific genes. Acts in cooperation with the Hedgehog pathway-dependent GLI (GLI1 and GLI3) transcription factors. In addition to cartilage development, also acts as a regulator of proliferation and differentiation in epithelial stem/progenitor cells: involved in the lung epithelium during branching morphogenesis, by balancing proliferation and differentiation and regulating the extracellular matrix. Controls epithelial branching during kidney development. The polypeptide is Transcription factor SOX-9 (SOX9) (Sus scrofa (Pig)).